Here is a 215-residue protein sequence, read N- to C-terminus: Ion-translocating oxidoreductase complex subunit G (215 aa).

A helical transmembrane segment spans residues 9–29 (GLLLSGFALICTAAVALVNEA). T176 bears the FMN phosphoryl threonine mark.

Belongs to the RnfG family. The complex is composed of six subunits: RnfA, RnfB, RnfC, RnfD, RnfE and RnfG. FMN serves as cofactor.

Its subcellular location is the cell inner membrane. Part of a membrane-bound complex that couples electron transfer with translocation of ions across the membrane. The sequence is that of Ion-translocating oxidoreductase complex subunit G from Shewanella amazonensis (strain ATCC BAA-1098 / SB2B).